We begin with the raw amino-acid sequence, 560 residues long: Dimethylaniline monooxygenase [N-oxide-forming] 4 (560 aa).

FAD-binding positions include 9 to 13 (GAGVS), glutamate 32, and 40 to 41 (LW). Residues 60–61 (TN) and 195–198 (TGGD) contribute to the NADP(+) site. The helical transmembrane segment at 519-539 (APVLIVSLLLIYKSSLFLELV) threads the bilayer.

The protein belongs to the FMO family. The cofactor is FAD. As to expression, detected in liver and kidney (at protein level).

Its subcellular location is the microsome membrane. The protein localises to the endoplasmic reticulum membrane. The enzyme catalyses N,N-dimethylaniline + NADPH + O2 + H(+) = N,N-dimethylaniline N-oxide + NADP(+) + H2O. This protein is involved in the oxidative metabolism of a variety of xenobiotics such as drugs and pesticides. In Rattus norvegicus (Rat), this protein is Dimethylaniline monooxygenase [N-oxide-forming] 4 (Fmo4).